We begin with the raw amino-acid sequence, 373 residues long: 2-phosphonomethylmalate synthase (373 aa).

Residues 5-256 enclose the Pyruvate carboxyltransferase domain; sequence LVLEDTTLRD…DLGIDLTKLK (252 aa).

It belongs to the alpha-IPM synthase/homocitrate synthase family.

It catalyses the reaction 3-phosphonopyruvate + acetyl-CoA + H2O = (R)-2-(phosphonomethyl)malate + CoA + H(+). Its pathway is antibiotic biosynthesis. In terms of biological role, acyltransferase involved in the biosynthesis of the phosphonate antibiotic FR-900098, a potent antimalarial agent that acts as an inhibitor of 1-deoxy-D-xylulose 5-phosphate reductoisomerase (DXR), the first enzyme in the nonmevalonate pathway for isoprenoid biosynthesis. Catalyzes the condensation between acetyl-CoA and phosphonopyruvate to yield (R)-2-(phosphonomethyl)malate. The polypeptide is 2-phosphonomethylmalate synthase (Streptomyces rubellomurinus (strain ATCC 31215)).